Consider the following 298-residue polypeptide: Apolipoprotein E (298 aa).

Residues Met-1 to Ala-18 form the signal peptide. 8 consecutive repeat copies span residues Leu-74–Leu-94, Gly-95–Leu-116, Gly-117–Leu-138, Gly-139–Leu-160, Gln-161–Ala-182, Glu-183–Gln-203, Ala-204–Met-221, and Arg-222–Met-243. The tract at residues Gly-95 to Met-243 is 8 X 22 AA approximate tandem repeats. Met-137 carries the methionine sulfoxide modification. Position 141 is a phosphoserine (Ser-141). The segment at Ser-151–Gln-161 is LDL and other lipoprotein receptors binding. Residue Lys-155–Lys-158 participates in heparin binding. Residues Gln-203–Asp-271 are lipid-binding and lipoprotein association. Residue Trp-217 to Arg-224 participates in heparin binding. The tract at residues Ala-259–Asp-271 is specificity for association with VLDL.

This sequence belongs to the apolipoprotein A1/A4/E family. In terms of assembly, homotetramer. May interact with ABCA1; functionally associated with ABCA1 in the biogenesis of HDLs. May interact with APP/A4 amyloid-beta peptide; the interaction is extremely stable in vitro but its physiological significance is unclear. May interact with MAPT. May interact with MAP2. In the cerebrospinal fluid, interacts with secreted SORL1. Interacts with PMEL; this allows the loading of PMEL luminal fragment on ILVs to induce fibril nucleation. In terms of processing, APOE exists as multiple glycosylated and sialylated glycoforms within cells and in plasma. The extent of glycosylation and sialylation are tissue and context specific. Post-translationally, glycated in plasma VLDL. Phosphorylated by FAM20C in the extracellular medium.

The protein resides in the secreted. The protein localises to the extracellular space. It is found in the extracellular matrix. It localises to the extracellular vesicle. Its subcellular location is the endosome. The protein resides in the multivesicular body. APOE is an apolipoprotein, a protein associating with lipid particles, that mainly functions in lipoprotein-mediated lipid transport between organs via the plasma and interstitial fluids. APOE is a core component of plasma lipoproteins and is involved in their production, conversion and clearance. Apolipoproteins are amphipathic molecules that interact both with lipids of the lipoprotein particle core and the aqueous environment of the plasma. As such, APOE associates with chylomicrons, chylomicron remnants, very low density lipoproteins (VLDL) and intermediate density lipoproteins (IDL) but shows a preferential binding to high-density lipoproteins (HDL). It also binds a wide range of cellular receptors including the LDL receptor/LDLR, the LDL receptor-related proteins LRP1, LRP2 and LRP8 and the very low-density lipoprotein receptor/VLDLR that mediate the cellular uptake of the APOE-containing lipoprotein particles. Finally, APOE also has a heparin-binding activity and binds heparan-sulfate proteoglycans on the surface of cells, a property that supports the capture and the receptor-mediated uptake of APOE-containing lipoproteins by cells. A main function of APOE is to mediate lipoprotein clearance through the uptake of chylomicrons, VLDLs, and HDLs by hepatocytes. APOE is also involved in the biosynthesis by the liver of VLDLs as well as their uptake by peripheral tissues ensuring the delivery of triglycerides and energy storage in muscle, heart and adipose tissues. By participating in the lipoprotein-mediated distribution of lipids among tissues, APOE plays a critical role in plasma and tissues lipid homeostasis. APOE is also involved in two steps of reverse cholesterol transport, the HDLs-mediated transport of cholesterol from peripheral tissues to the liver, and thereby plays an important role in cholesterol homeostasis. First, it is functionally associated with ABCA1 in the biogenesis of HDLs in tissues. Second, it is enriched in circulating HDLs and mediates their uptake by hepatocytes. APOE also plays an important role in lipid transport in the central nervous system, regulating neuron survival and sprouting. The protein is Apolipoprotein E (APOE) of Cavia tschudii (Montane guinea pig).